We begin with the raw amino-acid sequence, 249 residues long: MAGHSKWANIKHRKAKQDASRGKVFTKYIREIVTAAKLGGADPASNPRLRAVVEKALSVNMTRDTINRAIQRGVGGEDNDDLKEVTYEGYGVGGVAVLVETMTDNLNRTVPDVRHCFSKTNGNLGTAGSVAYLFTKRGEITFDDVSLEDKIMDVALEAGAEDIEVSEDEILVITSPETFGEVQDALAAAGLKSDNAEVVMSPSTKAEITDIDQAKQVMKLIDMLEDLDDVQNVYTNVEFSDEVLAQLDA.

The protein belongs to the TACO1 family.

The protein localises to the cytoplasm. In Acinetobacter baumannii (strain AB0057), this protein is Probable transcriptional regulatory protein AB57_1731.